Here is a 471-residue protein sequence, read N- to C-terminus: FAD-linked oxidoreductase sorD (471 aa).

The signal sequence occupies residues 1–23 (MQAASAFATCLLASVGGNSSAVA). Residues N18, N29, N174, N279, and N351 are each glycosylated (N-linked (GlcNAc...) asparagine). In terms of domain architecture, FAD-binding PCMH-type spans 41–212 (LLTTPSAIVW…TDFSIRTEPV (172 aa)).

Belongs to the oxygen-dependent FAD-linked oxidoreductase family. FAD serves as cofactor.

Its pathway is secondary metabolite biosynthesis. Functionally, FAD-linked oxidoreductase; part of the gene cluster that mediates the biosynthesis of sorbicillinoids, a diverse group of yellow secondary metabolites that restrict growth of competing pathogenic fungi but not of bacteria. Sorbicillinoids biosynthesis requires the action of two PKSs. SorA iteratively combines three acetyl units and the growing chain is modified by the ketoacyl reductase subunit, and optional by the enoyl reductase subunit in the second cycle. The polyketide is then handed over to the PKS SorB, which adds three more acetyl units, and two methyl groups. SorB releases an aldehyde, which undergoes spontaneous cyclization resulting in the formation of sorbicillin or 2',3'-dihydrosorbicillin. The monooxygenase sorC oxidizes sorbicillin and 2',3'-dihydrosorbicillin to 2',3'-dihydrosorbicillinol and sorbicillinol, respectively. The oxidoreductase sorD further converts sorbicillinol into oxosorbicillinol. Sorbicillinol is the building block for the other sorbicillinoids such as disorbicillinol, bisvertinolon, and dihydrobisvertinolone. This is FAD-linked oxidoreductase sorD from Penicillium rubens (strain ATCC 28089 / DSM 1075 / NRRL 1951 / Wisconsin 54-1255) (Penicillium chrysogenum).